Reading from the N-terminus, the 251-residue chain is NADPH-dependent oxidoreductase (251 aa).

The protein belongs to the flavin oxidoreductase frp family. It depends on FMN as a cofactor.

Functionally, reduces FMN, organic nitro compounds and disulfide DTNB. Involved in maintenance of the cellular redox state and the disulfide stress response. The protein is NADPH-dependent oxidoreductase (nfrA) of Staphylococcus epidermidis (strain ATCC 12228 / FDA PCI 1200).